The chain runs to 199 residues: Outer dense fiber protein 4 (199 aa).

The segment covering 1-14 has biased composition (basic and acidic residues); it reads MNIRSLERAGRAGK. The interval 1–25 is disordered; that stretch reads MNIRSLERAGRAGKQDGVAVSPGQE. Position 53 is a phosphoserine (S53). A run of 3 helical transmembrane segments spans residues 68–88, 109–128, and 159–179; these read IAQV…VVMV, VTTK…LHIY, and LALG…IPGL.

It localises to the membrane. Component of the outer dense fibers (ODF) of spermatozoa which could be involved in sperm tail structure, sperm movement and general organization of cellular cytoskeleton. This is Outer dense fiber protein 4 (ODF4) from Bos taurus (Bovine).